Reading from the N-terminus, the 562-residue chain is MSNSKEIPSFRWTQSLRRELSSFTIPVKSDVLKDAKMIADGLDFSQVALVQRVLRKTKRTDGDLDKLRDLNREVDNLMAMKSAQKNTILKLGDLNKSELMDLASDLEKLKKKVGQTERSPVGGVYLGNLSQSQLSKRTDLLRRLGFQQPQVRSTGVVRIWDVADPTRLNNQFGSVPALTIACMTVQGGDTMGNVVQALTSLGLLYTVKFPNLADLEKLAAEHDCLQIITKDESAINISGYNFSLSAAVKAGATFLDGGNMLETIKVTPDNFSTIIKTVLGVKKRENMFIDERPGNRNPYENLLYKLCLSGEGWPYIGSRSQVKGRSWENTTVDLSLKPTQGPKAPEKVGLNVRLSHLTEIQESVVREAMSKINPSHTTWIDIEGTSNDPVELALYQPESGNYILCYRKPHDEKGFKNGSRHSHGMLLKDLESAQPGLLSYIIGLLPQDMVLTAQGSDDIKRLLDTHGRKDLKVVDVKLSSDQARNYEEQVWSDFGHLCKKHNGVVVPKKKKDKDPSQSTEPHCALLDCLMFQSVIDGQPPQIKLQSLLPEVLLFTMKPAFAI.

Positions 54–237 are binding site for the cap structure m7GTP; that stretch reads LRKTKRTDGD…ITKDESAINI (184 aa). Asp-381 and Glu-383 together coordinate Mn(2+). Residues Glu-391, Cys-498, His-501, and Cys-523 each coordinate Zn(2+). Residue Asp-527 coordinates Mn(2+).

It belongs to the arenaviridae nucleocapsid protein family. Homomultimerizes to form the nucleocapsid. Binds to viral genomic RNA. Interacts with glycoprotein G2. Interacts with protein Z; this interaction probably directs the encapsidated genome to budding sites. Interacts with protein L; this interaction does not interfere with Z-L interaction. Interacts with host IKBKE (via Protein kinase domain); the interaction inhibits IKBKE kinase activity.

The protein resides in the virion. The protein localises to the host cytoplasm. Its function is as follows. Encapsidates the genome, protecting it from nucleases. The encapsidated genomic RNA is termed the nucleocapsid (NC). Serves as template for viral transcription and replication. The increased presence of protein N in host cell does not seem to trigger the switch from transcription to replication as observed in other negative strain RNA viruses. Through the interaction with host IKBKE, strongly inhibits the phosphorylation and nuclear translocation of host IRF3, a protein involved in interferon activation pathway, leading to the inhibition of interferon-beta and IRF3-dependent promoters activation. Also encodes a functional 3'-5' exoribonuclease that degrades preferentially dsRNA substrates and thereby participates in the suppression of interferon induction. In Homo sapiens (Human), this protein is Nucleoprotein.